A 67-amino-acid polypeptide reads, in one-letter code: Potassium channel toxin alpha-KTx 6.16 (67 aa).

A signal peptide spans 1–24 (MNLKLALVLLLTVINVGMLPGATS). 4 disulfides stabilise this stretch: C34/C55, C40/C60, C44/C62, and C50/C65.

It belongs to the short scorpion toxin superfamily. Potassium channel inhibitor family. Alpha-KTx 06 subfamily. As to expression, expressed by the venom gland.

It is found in the secreted. Inhibits voltage-gated potassium channels. The sequence is that of Potassium channel toxin alpha-KTx 6.16 from Opisthacanthus cayaporum (South American scorpion).